The primary structure comprises 249 residues: DNA polymerase sliding clamp (249 aa).

This sequence belongs to the PCNA family. As to quaternary structure, homotrimer. The subunits circularize to form a toroid; DNA passes through its center. Replication factor C (RFC) is required to load the toroid on the DNA.

Its function is as follows. Sliding clamp subunit that acts as a moving platform for DNA processing. Responsible for tethering the catalytic subunit of DNA polymerase and other proteins to DNA during high-speed replication. This is DNA polymerase sliding clamp from Methanococcus vannielii (strain ATCC 35089 / DSM 1224 / JCM 13029 / OCM 148 / SB).